A 370-amino-acid chain; its full sequence is Coiled-coil domain-containing protein 89 (370 aa).

The disordered stretch occupies residues 1 to 38; that stretch reads MPQEESAPRMDTPSSEEPLDKQNRKLEDQEEEMGFKEL. Phosphothreonine is present on T12. A compositionally biased stretch (basic and acidic residues) spans 18–38; that stretch reads PLDKQNRKLEDQEEEMGFKEL. Positions 19–346 form a coiled coil; it reads LDKQNRKLED…YDELRLQSEA (328 aa).

This sequence belongs to the CCDC89 family. As to quaternary structure, interacts with HEY1.

The protein resides in the cytoplasm. The protein localises to the nucleus. This is Coiled-coil domain-containing protein 89 from Bos taurus (Bovine).